The following is an 86-amino-acid chain: Small ribosomal subunit protein uS15 (86 aa).

The segment covering 1–10 has biased composition (polar residues); that stretch reads MSIDTQSIIE. Residues 1 to 21 are disordered; that stretch reads MSIDTQSIIENNKRSAHDTGS.

It belongs to the universal ribosomal protein uS15 family. Part of the 30S ribosomal subunit. Forms a bridge to the 50S subunit in the 70S ribosome, contacting the 23S rRNA.

Its function is as follows. One of the primary rRNA binding proteins, it binds directly to 16S rRNA where it helps nucleate assembly of the platform of the 30S subunit by binding and bridging several RNA helices of the 16S rRNA. In terms of biological role, forms an intersubunit bridge (bridge B4) with the 23S rRNA of the 50S subunit in the ribosome. The polypeptide is Small ribosomal subunit protein uS15 (Xylella fastidiosa (strain 9a5c)).